The following is a 114-amino-acid chain: Pro-FMRFamide-related neuropeptide FF (114 aa).

Positions 1 to 21 (MDSKWAAVLLLLLLLRNWGHA) are cleaved as a signal peptide. The propeptide occupies 22–69 (EEAGSWGEDQVFAEEDKGPHPSQYAHTPDRIQTPGSLMRVLLQAMERP). The disordered stretch occupies residues 29–51 (EDQVFAEEDKGPHPSQYAHTPDR). Phe82 carries the post-translational modification Phenylalanine amide. The propeptide occupies 85 to 100 (NAWGPWSKEQLSPQAR). Position 111 is a phenylalanine amide (Phe111).

Belongs to the FARP (FMRFamide related peptide) family.

The protein resides in the secreted. In terms of biological role, morphine modulating peptides. Have wide-ranging physiologic effects, including the modulation of morphine-induced analgesia, elevation of arterial blood pressure, and increased somatostatin secretion from the pancreas. Neuropeptide FF and SF potentiate and sensitize ASIC2 and ASIC3 channels. This Rattus norvegicus (Rat) protein is Pro-FMRFamide-related neuropeptide FF (Npff).